The following is a 3677-amino-acid chain: Dystrophin (3677 aa).

The segment at 1–240 (MLWWEEVEDC…YITSLFQVLP (240 aa)) is actin-binding. Calponin-homology (CH) domains are found at residues 15 to 119 (DVQK…LHWQ) and 134 to 240 (TNSE…QVLP). Residues 63–72 (PKEKGSTRVH) are ANK2- and ANK-3 binding. 23 Spectrin repeats span residues 342-447 (LDSY…SNLH), 451-557 (MDLQ…LLQD), 560-668 (LKWQ…QISQ), 728-828 (DITE…NWLE), 831-935 (NNII…ELQT), 944-1046 (RYQE…KLEE), 1049-1154 (NKLR…EALK), 1163-1264 (LQKD…TLEE), 1268-1464 (CWHE…LFQK), 1469-1569 (EQRL…QLEK), 1573-1676 (LSRK…NLLL), 1680-1777 (KHME…TGKA), 1779-1875 (IPLK…KALE), 1878-1980 (HQWY…TLHE), 2001-2098 (YLTE…ERQG), 2106-2209 (KWRH…RVEE), 2215-2316 (SEFQ…GELE), 2317-2415 (VHIK…LRTK), 2465-2569 (ADFN…QLNE), 2576-2678 (QWLE…ALEE), 2682-2786 (LLQQ…KKSL), 2800-2922 (KRLH…RKID), and 2927-3032 (RLQE…QLHE). Residues 1416-1914 (SDLTSHEISL…PEPRDERKIK (499 aa)) form an interaction with SYNM region. Residues 3047–3080 (TSVQGPWERAISPNKVPYYINHETQTTCWDHPKM) form the WW domain. The interaction with SYNM stretch occupies residues 3050-3400 (QGPWERAISP…TVLEGDNMET (351 aa)). A ZZ-type; degenerate zinc finger spans residues 3300 to 3356 (KHQAKCNICKECPIIGFRYRSLKHFNYDICQSCFFSGRVAKGHKMHYPMVEYCTPTT). Cys3305, Cys3308, Cys3329, and Cys3332 together coordinate Zn(2+). The interval 3458 to 3510 (DDEHLLIQHYCQSLNQDSPLSQPRSPAQILISLESEERGELERILADLEEENR) is binds to SNTB1. A phosphoserine mark is found at Ser3475, Ser3482, and Ser3492. Disordered regions lie at residues 3520-3546 (KQQH…QSPR) and 3595-3677 (EAKV…EDTM). 2 stretches are compositionally biased toward polar residues: residues 3599–3618 (NGTT…SSQP) and 3654–3664 (QLNNSFPSSRG). Phosphoserine is present on residues Ser3604, Ser3605, Ser3609, Ser3615, Ser3616, and Ser3658.

As to quaternary structure, interacts with SYNM. Interacts with the syntrophins SNTG1 and SNTG2. Interacts with KRT19. Component of the dystrophin-associated glycoprotein complex which is composed of three subcomplexes: a cytoplasmic complex comprised of DMD (or UTRN), DTNA and a number of syntrophins, such as SNTB1, SNTB2, SNTG1 and SNTG2, the transmembrane dystroglycan complex, and the sarcoglycan-sarcospan complex. Interacts with DAG1 (betaDAG1) with DMD; the interaction is inhibited by phosphorylation on the PPXY motif of DAG1. Interacts with SYNM; SNTA1 and SNTB1. Interacts with CMYA5. Directly interacts with ANK2 and ANK3; these interactions do not interfere with betaDAG1-binding and are necessary for proper localization in muscle cells. Identified in a dystroglycan complex that contains at least PRX, DRP2, UTRN, DMD and DAG1. Interacts with DTNB. Interacts with PGM5; the interaction is direct. Interacts with NOS1; localizes NOS1 to sarcolemma in muscle cells. As to expression, strongly expressed in skeletal muscle and weak expression observed in newborn brain which increases in adult brain.

The protein localises to the cell membrane. It is found in the sarcolemma. The protein resides in the cytoplasm. It localises to the cytoskeleton. Its subcellular location is the postsynaptic cell membrane. Its function is as follows. Anchors the extracellular matrix to the cytoskeleton via F-actin. Ligand for dystroglycan. Component of the dystrophin-associated glycoprotein complex which accumulates at the neuromuscular junction (NMJ) and at a variety of synapses in the peripheral and central nervous systems and has a structural function in stabilizing the sarcolemma. Also implicated in signaling events and synaptic transmission. The protein is Dystrophin (Dmd) of Rattus norvegicus (Rat).